The following is a 525-amino-acid chain: Probable protein kinase UbiB (525 aa).

One can recognise a Protein kinase domain in the interval 119–501; sequence RFDHHPVASA…QRRTNRLLSA (383 aa). ATP-binding positions include 125–133 and lysine 151; that span reads VASASIAQV. Aspartate 286 serves as the catalytic Proton acceptor. The helical transmembrane segment at 502-522 threads the bilayer; sequence ALLFIGGFAVGIIATHVLAWL.

Belongs to the ABC1 family. UbiB subfamily.

The protein localises to the cell inner membrane. The protein operates within cofactor biosynthesis; ubiquinone biosynthesis [regulation]. Its function is as follows. Is probably a protein kinase regulator of UbiI activity which is involved in aerobic coenzyme Q (ubiquinone) biosynthesis. The protein is Probable protein kinase UbiB of Ralstonia nicotianae (strain ATCC BAA-1114 / GMI1000) (Ralstonia solanacearum).